Reading from the N-terminus, the 420-residue chain is Histidine--tRNA ligase (420 aa).

It belongs to the class-II aminoacyl-tRNA synthetase family. Homodimer.

The protein resides in the cytoplasm. It catalyses the reaction tRNA(His) + L-histidine + ATP = L-histidyl-tRNA(His) + AMP + diphosphate + H(+). The polypeptide is Histidine--tRNA ligase (hisS) (Mycoplasmopsis pulmonis (strain UAB CTIP) (Mycoplasma pulmonis)).